Reading from the N-terminus, the 450-residue chain is Phosphoglucosamine mutase (450 aa).

Ser102 serves as the catalytic Phosphoserine intermediate. Positions 102, 242, 244, and 246 each coordinate Mg(2+). Ser102 carries the phosphoserine modification.

Belongs to the phosphohexose mutase family. Mg(2+) serves as cofactor. In terms of processing, activated by phosphorylation.

It carries out the reaction alpha-D-glucosamine 1-phosphate = D-glucosamine 6-phosphate. Its function is as follows. Catalyzes the conversion of glucosamine-6-phosphate to glucosamine-1-phosphate. This Lachnospira eligens (strain ATCC 27750 / DSM 3376 / VPI C15-48 / C15-B4) (Eubacterium eligens) protein is Phosphoglucosamine mutase.